The chain runs to 96 residues: Protein S100-A10 (96 aa).

The segment at 62–73 (DDCRKGQVNFRS) is ancestral calcium site.

The protein belongs to the S-100 family. In terms of assembly, tetramer of 2 light chains (p10) and 2 heavy chains (annexin II).

Because p10 induces the dimerization of annexin II (p36), it may function as a regulator of protein phosphorylation in that the p36 monomer is the preferred target (in vitro) of tyrosine-specific kinase. In Xenopus laevis (African clawed frog), this protein is Protein S100-A10 (s100a10).